The sequence spans 490 residues: Cobyric acid synthase (490 aa).

In terms of domain architecture, GATase cobBQ-type spans Q250–W432. C328 serves as the catalytic Nucleophile. The active site involves H424.

It belongs to the CobB/CobQ family. CobQ subfamily.

The protein operates within cofactor biosynthesis; adenosylcobalamin biosynthesis. In terms of biological role, catalyzes amidations at positions B, D, E, and G on adenosylcobyrinic A,C-diamide. NH(2) groups are provided by glutamine, and one molecule of ATP is hydrogenolyzed for each amidation. This chain is Cobyric acid synthase, found in Gloeobacter violaceus (strain ATCC 29082 / PCC 7421).